The chain runs to 344 residues: Zinc metalloproteinase nas-6 (344 aa).

The N-terminal stretch at 1-19 is a signal peptide; it reads MLDHVLLLTYCLVSTVVRS. The Peptidase M12A domain maps to 72–266; the sequence is NALKNKQLTW…VKINKLYSCK (195 aa). Intrachain disulfides connect C114–C265, C135–C154, C300–C334, C307–C327, and C314–C331. H162 serves as a coordination point for Zn(2+). E163 is an active-site residue. Residues H166 and H172 each coordinate Zn(2+). In terms of domain architecture, ShKT spans 300–334; sequence CVDHFADCPHFAQYCTRASFFFVMKSYCPFTCKHC.

Requires Zn(2+) as cofactor. In terms of tissue distribution, expressed in pharyngeal and body wall muscles, intestine, hypodermis and pharyngeal mc2 cells.

The protein localises to the secreted. Its function is as follows. Metalloprotease. This Caenorhabditis elegans protein is Zinc metalloproteinase nas-6 (nas-6).